Reading from the N-terminus, the 252-residue chain is Imidazole glycerol phosphate synthase subunit HisF (252 aa).

Residues Asp11 and Asp130 contribute to the active site.

This sequence belongs to the HisA/HisF family. In terms of assembly, heterodimer of HisH and HisF.

Its subcellular location is the cytoplasm. It carries out the reaction 5-[(5-phospho-1-deoxy-D-ribulos-1-ylimino)methylamino]-1-(5-phospho-beta-D-ribosyl)imidazole-4-carboxamide + L-glutamine = D-erythro-1-(imidazol-4-yl)glycerol 3-phosphate + 5-amino-1-(5-phospho-beta-D-ribosyl)imidazole-4-carboxamide + L-glutamate + H(+). The protein operates within amino-acid biosynthesis; L-histidine biosynthesis; L-histidine from 5-phospho-alpha-D-ribose 1-diphosphate: step 5/9. IGPS catalyzes the conversion of PRFAR and glutamine to IGP, AICAR and glutamate. The HisF subunit catalyzes the cyclization activity that produces IGP and AICAR from PRFAR using the ammonia provided by the HisH subunit. The sequence is that of Imidazole glycerol phosphate synthase subunit HisF from Bacillus cereus (strain G9842).